A 454-amino-acid chain; its full sequence is Tubulin beta-3 chain (454 aa).

GTP-binding residues include glutamine 11, glutamate 75, serine 144, glycine 148, threonine 149, glycine 150, asparagine 210, and asparagine 232. Glutamate 75 serves as a coordination point for Mg(2+). The disordered stretch occupies residues threonine 435 to isoleucine 454.

It belongs to the tubulin family. Dimer of alpha and beta chains. A typical microtubule is a hollow water-filled tube with an outer diameter of 25 nm and an inner diameter of 15 nM. Alpha-beta heterodimers associate head-to-tail to form protofilaments running lengthwise along the microtubule wall with the beta-tubulin subunit facing the microtubule plus end conferring a structural polarity. Microtubules usually have 13 protofilaments but different protofilament numbers can be found in some organisms and specialized cells. Mg(2+) serves as cofactor.

Its subcellular location is the cytoplasm. It localises to the cytoskeleton. Functionally, tubulin is the major constituent of microtubules, a cylinder consisting of laterally associated linear protofilaments composed of alpha- and beta-tubulin heterodimers. Microtubules grow by the addition of GTP-tubulin dimers to the microtubule end, where a stabilizing cap forms. Below the cap, tubulin dimers are in GDP-bound state, owing to GTPase activity of alpha-tubulin. In Drosophila melanogaster (Fruit fly), this protein is Tubulin beta-3 chain (betaTub60D).